The sequence spans 90 residues: Small ribosomal subunit protein bS16 (90 aa).

Belongs to the bacterial ribosomal protein bS16 family.

This Bacillus velezensis (strain DSM 23117 / BGSC 10A6 / LMG 26770 / FZB42) (Bacillus amyloliquefaciens subsp. plantarum) protein is Small ribosomal subunit protein bS16.